A 948-amino-acid polypeptide reads, in one-letter code: Valine--tRNA ligase (948 aa).

The 'HIGH' region signature appears at 40 to 50 (PNVTGSLHMGH). Residues 551–555 (KMSKS) carry the 'KMSKS' region motif. Residue Lys554 coordinates ATP. Positions 879 to 945 (LIDKGAELAR…GKLAEQHARI (67 aa)) form a coiled coil.

It belongs to the class-I aminoacyl-tRNA synthetase family. ValS type 1 subfamily. As to quaternary structure, monomer.

The protein localises to the cytoplasm. It catalyses the reaction tRNA(Val) + L-valine + ATP = L-valyl-tRNA(Val) + AMP + diphosphate. Its function is as follows. Catalyzes the attachment of valine to tRNA(Val). As ValRS can inadvertently accommodate and process structurally similar amino acids such as threonine, to avoid such errors, it has a 'posttransfer' editing activity that hydrolyzes mischarged Thr-tRNA(Val) in a tRNA-dependent manner. In Pseudomonas syringae pv. syringae (strain B728a), this protein is Valine--tRNA ligase.